Reading from the N-terminus, the 872-residue chain is G-type lectin S-receptor-like serine/threonine-protein kinase At5g24080 (872 aa).

Positions 1–25 (MSSFHFYFPSVGLFSFFCFFLVSLA) are cleaved as a signal peptide. Over 26-472 (TEPHIGLGSK…SRKSHGLRQK (447 aa)) the chain is Extracellular. In terms of domain architecture, Bulb-type lectin spans 30 to 149 (IGLGSKLKAS…EVTAGPTIWQ (120 aa)). Residues N49, N117, N208, N219, N261, and N294 are each glycosylated (N-linked (GlcNAc...) asparagine). Residues 306–344 (VSNPCDIAGICGNGVCNLDRTKKNADCLCLPGSVKLPDQ) form the EGF-like; atypical domain. Intrachain disulfides connect C310/C321 and C316/C332. Residues N353, N367, and N390 are each glycosylated (N-linked (GlcNAc...) asparagine). The region spanning 360-447 (CESNINRNGS…PGSTLFVKTR (88 aa)) is the PAN domain. Cystine bridges form between C400–C424 and C404–C410. N-linked (GlcNAc...) asparagine glycans are attached at residues N449 and N459. Residues 473-493 (VLVIPIVVGMLVLVALLGMLL) traverse the membrane as a helical segment. Residues 494–872 (YYNLDRKRTL…TCSYSSMSPR (379 aa)) lie on the Cytoplasmic side of the membrane. T521 bears the Phosphothreonine mark. Residues 530-810 (NNFSQLLGSG…LEGTSDEINL (281 aa)) form the Protein kinase domain. Residues 536-544 (LGSGGFGTV) and K558 each bind ATP. Phosphotyrosine is present on Y603. A caM-binding region spans residues 619–637 (EQTANLLDWRTRFEIAVAT). The active-site Proton acceptor is the D656. T690 and T695 each carry phosphothreonine.

It belongs to the protein kinase superfamily. Ser/Thr protein kinase family.

The protein localises to the cell membrane. The enzyme catalyses L-seryl-[protein] + ATP = O-phospho-L-seryl-[protein] + ADP + H(+). It catalyses the reaction L-threonyl-[protein] + ATP = O-phospho-L-threonyl-[protein] + ADP + H(+). The polypeptide is G-type lectin S-receptor-like serine/threonine-protein kinase At5g24080 (Arabidopsis thaliana (Mouse-ear cress)).